The sequence spans 568 residues: Cytosolic purine 5'-nucleotidase (568 aa).

D52 acts as the Nucleophile in catalysis. 2 residues coordinate IMP: D52 and D54. Residues D52 and D54 each contribute to the Mg(2+) site. D54 serves as the catalytic Proton donor. R144 and N154 together coordinate ATP. IMP-binding residues include R202, D206, K215, T249, N250, S251, and K292. Mg(2+) is bound at residue D351. Q453 and R456 together coordinate ATP. The tract at residues 528–568 (ISEIKPPNLFPQKPQEITHCHDEDDDEEEEEEEEEEEEEEE) is disordered. The segment at 548 to 568 (HDEDDDEEEEEEEEEEEEEEE) is required for tetramer assembly. Acidic residues predominate over residues 550-568 (EDDDEEEEEEEEEEEEEEE).

The protein belongs to the 5'(3')-deoxyribonucleotidase family. Homotetramer. The cofactor is Mg(2+).

It localises to the cytoplasm. Its subcellular location is the cytosol. The catalysed reaction is a ribonucleoside 5'-phosphate + H2O = a ribonucleoside + phosphate. The enzyme catalyses a 2'-deoxyribonucleoside + a ribonucleoside 5'-phosphate = a ribonucleoside + a 2'-deoxyribonucleoside 5'-phosphate. It catalyses the reaction IMP + H2O = inosine + phosphate. It carries out the reaction GMP + H2O = guanosine + phosphate. The catalysed reaction is dIMP + H2O = 2'-deoxyinosine + phosphate. The enzyme catalyses dGMP + H2O = 2'-deoxyguanosine + phosphate. It catalyses the reaction XMP + H2O = xanthosine + phosphate. It carries out the reaction inosine + GMP = guanosine + IMP. The catalysed reaction is dGMP + inosine = 2'-deoxyguanosine + IMP. The enzyme catalyses dIMP + inosine = 2'-deoxyinosine + IMP. It catalyses the reaction inosine + UMP = uridine + IMP. It carries out the reaction inosine + CMP = cytidine + IMP. The catalysed reaction is inosine + AMP = IMP + adenosine. With respect to regulation, allosterically activated by various compounds including ATP, 2,3-BPG/2,3-Bisphosphoglyceric acid and Ap4A/P1,P4-bis(5'-adenosyl) tetraphosphate. Binding of an allosteric activator is a prerequisiste to magnesium and substrate binding. Inhibited by inorganic phosphate. Functionally, broad specificity cytosolic 5'-nucleotidase that catalyzes the dephosphorylation of 6-hydroxypurine nucleoside 5'-monophosphates. In addition, possesses a phosphotransferase activity by which it can transfer a phosphate from a donor nucleoside monophosphate to an acceptor nucleoside, preferably inosine, deoxyinosine and guanosine. Has the highest activities for IMP and GMP followed by dIMP, dGMP and XMP. Could also catalyze the transfer of phosphates from pyrimidine monophosphates but with lower efficiency. Through these activities regulates the purine nucleoside/nucleotide pools within the cell. In Xenopus tropicalis (Western clawed frog), this protein is Cytosolic purine 5'-nucleotidase (nt5c2).